The chain runs to 353 residues: Photosystem II protein D1 (353 aa).

Threonine 2 carries the N-acetylthreonine modification. Threonine 2 bears the Phosphothreonine mark. 3 consecutive transmembrane segments (helical) span residues 29-46, 118-133, and 142-156; these read YIGW…TATS, HFLL…EWEL, and WIAV…AATA. Residue histidine 118 participates in chlorophyll a binding. Tyrosine 126 is a binding site for pheophytin a. Residues aspartate 170 and glutamate 189 each coordinate [CaMn4O5] cluster. A helical transmembrane segment spans residues 197 to 218; the sequence is FHMLGVAGVFGGSLFSAMHGSL. Chlorophyll a is bound at residue histidine 198. Residues histidine 215 and 264–265 contribute to the a quinone site; that span reads SF. Histidine 215 lines the Fe cation pocket. Histidine 272 contacts Fe cation. The helical transmembrane segment at 274 to 288 threads the bilayer; it reads FLAAWPVVGIWFTAL. Residues histidine 332, glutamate 333, aspartate 342, and alanine 344 each contribute to the [CaMn4O5] cluster site. Positions 345–353 are excised as a propeptide; the sequence is AVEVPSTNG.

Belongs to the reaction center PufL/M/PsbA/D family. PSII is composed of 1 copy each of membrane proteins PsbA, PsbB, PsbC, PsbD, PsbE, PsbF, PsbH, PsbI, PsbJ, PsbK, PsbL, PsbM, PsbT, PsbX, PsbY, PsbZ, Psb30/Ycf12, at least 3 peripheral proteins of the oxygen-evolving complex and a large number of cofactors. It forms dimeric complexes. It depends on The D1/D2 heterodimer binds P680, chlorophylls that are the primary electron donor of PSII, and subsequent electron acceptors. It shares a non-heme iron and each subunit binds pheophytin, quinone, additional chlorophylls, carotenoids and lipids. D1 provides most of the ligands for the Mn4-Ca-O5 cluster of the oxygen-evolving complex (OEC). There is also a Cl(-1) ion associated with D1 and D2, which is required for oxygen evolution. The PSII complex binds additional chlorophylls, carotenoids and specific lipids. as a cofactor. Tyr-161 forms a radical intermediate that is referred to as redox-active TyrZ, YZ or Y-Z. Post-translationally, C-terminally processed by CTPA; processing is essential to allow assembly of the oxygen-evolving complex and thus photosynthetic growth.

The protein localises to the plastid. It localises to the chloroplast thylakoid membrane. It carries out the reaction 2 a plastoquinone + 4 hnu + 2 H2O = 2 a plastoquinol + O2. Its function is as follows. Photosystem II (PSII) is a light-driven water:plastoquinone oxidoreductase that uses light energy to abstract electrons from H(2)O, generating O(2) and a proton gradient subsequently used for ATP formation. It consists of a core antenna complex that captures photons, and an electron transfer chain that converts photonic excitation into a charge separation. The D1/D2 (PsbA/PsbD) reaction center heterodimer binds P680, the primary electron donor of PSII as well as several subsequent electron acceptors. This Eucalyptus globulus subsp. globulus (Tasmanian blue gum) protein is Photosystem II protein D1.